Here is a 1038-residue protein sequence, read N- to C-terminus: Isoleucine--tRNA ligase (1038 aa).

The 'HIGH' region signature appears at 48 to 58 (PTANGKPHVGH). The 'KMSKS' region signature appears at 590 to 594 (KMSKS). K593 serves as a coordination point for ATP.

The protein belongs to the class-I aminoacyl-tRNA synthetase family. IleS type 2 subfamily. In terms of assembly, monomer. Zn(2+) serves as cofactor.

It is found in the cytoplasm. It catalyses the reaction tRNA(Ile) + L-isoleucine + ATP = L-isoleucyl-tRNA(Ile) + AMP + diphosphate. Its function is as follows. Catalyzes the attachment of isoleucine to tRNA(Ile). As IleRS can inadvertently accommodate and process structurally similar amino acids such as valine, to avoid such errors it has two additional distinct tRNA(Ile)-dependent editing activities. One activity is designated as 'pretransfer' editing and involves the hydrolysis of activated Val-AMP. The other activity is designated 'posttransfer' editing and involves deacylation of mischarged Val-tRNA(Ile). In Clostridium novyi (strain NT), this protein is Isoleucine--tRNA ligase.